A 156-amino-acid chain; its full sequence is 2-C-methyl-D-erythritol 2,4-cyclodiphosphate synthase (156 aa).

2 residues coordinate a divalent metal cation: D8 and H10. Residues 8-10 (DVH) and 34-35 (HS) each bind 4-CDP-2-C-methyl-D-erythritol 2-phosphate. H42 contributes to the a divalent metal cation binding site. 4-CDP-2-C-methyl-D-erythritol 2-phosphate is bound by residues 56-58 (DIG), 61-65 (FPDTD), 100-106 (AQRPKMA), 132-135 (TTEE), and F139.

This sequence belongs to the IspF family. Homotrimer. It depends on a divalent metal cation as a cofactor.

It carries out the reaction 4-CDP-2-C-methyl-D-erythritol 2-phosphate = 2-C-methyl-D-erythritol 2,4-cyclic diphosphate + CMP. It participates in isoprenoid biosynthesis; isopentenyl diphosphate biosynthesis via DXP pathway; isopentenyl diphosphate from 1-deoxy-D-xylulose 5-phosphate: step 4/6. Its function is as follows. Involved in the biosynthesis of isopentenyl diphosphate (IPP) and dimethylallyl diphosphate (DMAPP), two major building blocks of isoprenoid compounds. Catalyzes the conversion of 4-diphosphocytidyl-2-C-methyl-D-erythritol 2-phosphate (CDP-ME2P) to 2-C-methyl-D-erythritol 2,4-cyclodiphosphate (ME-CPP) with a corresponding release of cytidine 5-monophosphate (CMP). This is 2-C-methyl-D-erythritol 2,4-cyclodiphosphate synthase from Clostridium perfringens (strain ATCC 13124 / DSM 756 / JCM 1290 / NCIMB 6125 / NCTC 8237 / Type A).